The sequence spans 173 residues: Shikimate kinase (173 aa).

11 to 16 provides a ligand contact to ATP; it reads GAGKTT. Threonine 15 contacts Mg(2+). Aspartate 33, arginine 57, and glycine 79 together coordinate substrate. Arginine 118 contacts ATP. Arginine 140 lines the substrate pocket.

The protein belongs to the shikimate kinase family. As to quaternary structure, monomer. It depends on Mg(2+) as a cofactor.

The protein resides in the cytoplasm. It carries out the reaction shikimate + ATP = 3-phosphoshikimate + ADP + H(+). It functions in the pathway metabolic intermediate biosynthesis; chorismate biosynthesis; chorismate from D-erythrose 4-phosphate and phosphoenolpyruvate: step 5/7. In terms of biological role, catalyzes the specific phosphorylation of the 3-hydroxyl group of shikimic acid using ATP as a cosubstrate. The chain is Shikimate kinase from Parabacteroides distasonis (strain ATCC 8503 / DSM 20701 / CIP 104284 / JCM 5825 / NCTC 11152).